The following is a 342-amino-acid chain: UDP-3-O-acylglucosamine N-acyltransferase (342 aa).

The active-site Proton acceptor is the H253.

This sequence belongs to the transferase hexapeptide repeat family. LpxD subfamily. As to quaternary structure, homotrimer.

It catalyses the reaction a UDP-3-O-[(3R)-3-hydroxyacyl]-alpha-D-glucosamine + a (3R)-hydroxyacyl-[ACP] = a UDP-2-N,3-O-bis[(3R)-3-hydroxyacyl]-alpha-D-glucosamine + holo-[ACP] + H(+). It participates in bacterial outer membrane biogenesis; LPS lipid A biosynthesis. Functionally, catalyzes the N-acylation of UDP-3-O-acylglucosamine using 3-hydroxyacyl-ACP as the acyl donor. Is involved in the biosynthesis of lipid A, a phosphorylated glycolipid that anchors the lipopolysaccharide to the outer membrane of the cell. The protein is UDP-3-O-acylglucosamine N-acyltransferase of Rickettsia bellii (strain RML369-C).